The primary structure comprises 405 residues: S-adenosylmethionine synthase (405 aa).

141–146 (GQGSVD) is an ATP binding site.

The protein belongs to the AdoMet synthase 2 family. Mg(2+) is required as a cofactor.

The enzyme catalyses L-methionine + ATP + H2O = S-adenosyl-L-methionine + phosphate + diphosphate. Its pathway is amino-acid biosynthesis; S-adenosyl-L-methionine biosynthesis; S-adenosyl-L-methionine from L-methionine: step 1/1. Its function is as follows. Catalyzes the formation of S-adenosylmethionine from methionine and ATP. The sequence is that of S-adenosylmethionine synthase from Methanococcus maripaludis (strain C5 / ATCC BAA-1333).